Consider the following 347-residue polypeptide: DNA-directed RNA polymerase subunit alpha (347 aa).

Positions 1–230 (MFKGFQKPKR…DHMTIFINFE (230 aa)) are alpha N-terminal domain (alpha-NTD). Residues 247-347 (MNEVLNRSVE…EDDGQDQIGE (101 aa)) form an alpha C-terminal domain (alpha-CTD) region. Residues 320-347 (GRLVAPPPSAGGGPDFGPEDDGQDQIGE) form a disordered region. Acidic residues predominate over residues 336 to 347 (GPEDDGQDQIGE).

The protein belongs to the RNA polymerase alpha chain family. Homodimer. The RNAP catalytic core consists of 2 alpha, 1 beta, 1 beta' and 1 omega subunit. When a sigma factor is associated with the core the holoenzyme is formed, which can initiate transcription.

The catalysed reaction is RNA(n) + a ribonucleoside 5'-triphosphate = RNA(n+1) + diphosphate. Functionally, DNA-dependent RNA polymerase catalyzes the transcription of DNA into RNA using the four ribonucleoside triphosphates as substrates. The sequence is that of DNA-directed RNA polymerase subunit alpha from Solibacter usitatus (strain Ellin6076).